A 289-amino-acid chain; its full sequence is Epoxyqueuosine reductase (289 aa).

The active-site Proton donor is D111. The 4Fe-4S ferredoxin-type domain maps to 156–185 (QGDRPHSQHCGTCTRCLEACPTQAIVEPFV). Residues C165, C168, C171, C175, C191, C219, C222, and C226 each coordinate [4Fe-4S] cluster.

It belongs to the QueG family. As to quaternary structure, monomer. Cob(II)alamin is required as a cofactor. It depends on [4Fe-4S] cluster as a cofactor.

It localises to the cytoplasm. It catalyses the reaction epoxyqueuosine(34) in tRNA + AH2 = queuosine(34) in tRNA + A + H2O. It functions in the pathway tRNA modification; tRNA-queuosine biosynthesis. Functionally, catalyzes the conversion of epoxyqueuosine (oQ) to queuosine (Q), which is a hypermodified base found in the wobble positions of tRNA(Asp), tRNA(Asn), tRNA(His) and tRNA(Tyr). The polypeptide is Epoxyqueuosine reductase (Synechocystis sp. (strain ATCC 27184 / PCC 6803 / Kazusa)).